A 468-amino-acid polypeptide reads, in one-letter code: Protein NEN1 (468 aa).

One can recognise an Exonuclease domain in the interval 11–172; that stretch reads FFDVETTVPK…DDVRMNLEVL (162 aa). 2 residues coordinate Mg(2+): aspartate 13 and glutamate 15. The Proton donor/acceptor role is filled by histidine 159. Aspartate 164 lines the Mg(2+) pocket.

Mg(2+) serves as cofactor. Expressed in the sieve elements and phloem pole pericycle cells.

It localises to the cytoplasm. It is found in the nucleus. Functionally, probable exonuclease involved in enuclation of sieve elements. This Arabidopsis thaliana (Mouse-ear cress) protein is Protein NEN1.